The sequence spans 140 residues: Putative pre-16S rRNA nuclease (140 aa).

The protein belongs to the YqgF nuclease family.

The protein localises to the cytoplasm. In terms of biological role, could be a nuclease involved in processing of the 5'-end of pre-16S rRNA. The protein is Putative pre-16S rRNA nuclease of Yersinia pseudotuberculosis serotype IB (strain PB1/+).